We begin with the raw amino-acid sequence, 126 residues long: Holo-[acyl-carrier-protein] synthase (126 aa).

The Mg(2+) site is built by D9 and E58.

This sequence belongs to the P-Pant transferase superfamily. AcpS family. It depends on Mg(2+) as a cofactor.

Its subcellular location is the cytoplasm. It catalyses the reaction apo-[ACP] + CoA = holo-[ACP] + adenosine 3',5'-bisphosphate + H(+). Its function is as follows. Transfers the 4'-phosphopantetheine moiety from coenzyme A to a Ser of acyl-carrier-protein. The chain is Holo-[acyl-carrier-protein] synthase from Shewanella denitrificans (strain OS217 / ATCC BAA-1090 / DSM 15013).